Reading from the N-terminus, the 231-residue chain is MKRAVVVFSGGQDSTTCLVQALQQYDEVHCVTFDYGQRHRAEIDVARELALKLGARAHKVLDVTLLNELAVSSLTRDSIPVPDYEPEADGIPNTFVPGRNILFLTLAAIYAYQVKAEAVITGVCETDFSGYPDCRDEFVKALNHAVSLGMAKDIRFETPLMWIDKAETWALADYYGKLDLVRNETLTCYNGFKGDGCGHCAACNLRANGLNHYLADKPTVMAAMKQKTGLR.

Residue 8–18 (FSGGQDSTTCL) participates in ATP binding. Residues cysteine 188, cysteine 197, cysteine 200, and cysteine 203 each contribute to the Zn(2+) site.

It belongs to the QueC family. Zn(2+) serves as cofactor.

The catalysed reaction is 7-carboxy-7-deazaguanine + NH4(+) + ATP = 7-cyano-7-deazaguanine + ADP + phosphate + H2O + H(+). It functions in the pathway purine metabolism; 7-cyano-7-deazaguanine biosynthesis. Functionally, catalyzes the ATP-dependent conversion of 7-carboxy-7-deazaguanine (CDG) to 7-cyano-7-deazaguanine (preQ(0)). This is 7-cyano-7-deazaguanine synthase (queC) from Escherichia coli (strain K12).